The chain runs to 365 residues: Protein SGT1 homolog (365 aa).

Ala-2 is modified (N-acetylalanine). TPR repeat units lie at residues 11-44 (SQRF…KPDD), 45-78 (AQYY…NPNN), and 79-112 (STAM…DIET). Residues 169–258 (QSKIKYDWYQ…PEAVRWEKLE (90 aa)) enclose the CS domain. Thr-265 carries the post-translational modification Phosphothreonine. The SGS domain occupies 276-365 (LYPSSSPYTR…PPDDMEWKKY (90 aa)). Ser-281 is modified (phosphoserine). Thr-284 carries the post-translational modification Phosphothreonine. Lys-295 is covalently cross-linked (Glycyl lysine isopeptide (Lys-Gly) (interchain with G-Cter in SUMO1); alternate). A Glycyl lysine isopeptide (Lys-Gly) (interchain with G-Cter in SUMO2); alternate cross-link involves residue Lys-295. At Ser-331 the chain carries Phosphoserine.

Belongs to the SGT1 family. As to quaternary structure, probably associates with SCF (SKP1-CUL1-F-box protein) complex through interaction with SKP1. Interacts with S100A6. Interacts with HSP90. Post-translationally, phosphorylated at Ser-281 and Ser-331, dephosphorylation promotes nuclear translocation, most likely due to disruption of the SUGT1-HSP90 complex.

The protein localises to the cytoplasm. It is found in the nucleus. In terms of biological role, may play a role in ubiquitination and subsequent proteasomal degradation of target proteins. This Homo sapiens (Human) protein is Protein SGT1 homolog.